A 457-amino-acid chain; its full sequence is Allantoinase (457 aa).

Zn(2+)-binding residues include His-58, His-60, Lys-145, His-181, His-237, and Asp-310. Lys-145 carries the post-translational modification N6-carboxylysine.

Belongs to the metallo-dependent hydrolases superfamily. Allantoinase family. As to quaternary structure, homotetramer. Requires Zn(2+) as cofactor. Post-translationally, carboxylation allows a single lysine to coordinate two zinc ions.

It catalyses the reaction (S)-allantoin + H2O = allantoate + H(+). Its pathway is nitrogen metabolism; (S)-allantoin degradation; allantoate from (S)-allantoin: step 1/1. In terms of biological role, catalyzes the conversion of allantoin (5-ureidohydantoin) to allantoic acid by hydrolytic cleavage of the five-member hydantoin ring. The sequence is that of Allantoinase from Solibacter usitatus (strain Ellin6076).